The following is a 325-amino-acid chain: Phosphate acyltransferase (325 aa).

The protein belongs to the PlsX family. As to quaternary structure, homodimer. Probably interacts with PlsY.

It localises to the cytoplasm. The enzyme catalyses a fatty acyl-[ACP] + phosphate = an acyl phosphate + holo-[ACP]. It functions in the pathway lipid metabolism; phospholipid metabolism. In terms of biological role, catalyzes the reversible formation of acyl-phosphate (acyl-PO(4)) from acyl-[acyl-carrier-protein] (acyl-ACP). This enzyme utilizes acyl-ACP as fatty acyl donor, but not acyl-CoA. In Staphylococcus epidermidis (strain ATCC 12228 / FDA PCI 1200), this protein is Phosphate acyltransferase.